The primary structure comprises 490 residues: Bifunctional protein HldE (490 aa).

Positions 1–330 (MERKNVESLF…GSMGFQHSDS (330 aa)) are ribokinase. 205-208 (NRKE) serves as a coordination point for ATP. Aspartate 275 is a catalytic residue. Positions 356 to 490 (FTNGCFDLLH…DKILRAYGEE (135 aa)) are cytidylyltransferase.

The protein in the N-terminal section; belongs to the carbohydrate kinase PfkB family. This sequence in the C-terminal section; belongs to the cytidylyltransferase family. In terms of assembly, homodimer.

The catalysed reaction is D-glycero-beta-D-manno-heptose 7-phosphate + ATP = D-glycero-beta-D-manno-heptose 1,7-bisphosphate + ADP + H(+). It catalyses the reaction D-glycero-beta-D-manno-heptose 1-phosphate + ATP + H(+) = ADP-D-glycero-beta-D-manno-heptose + diphosphate. Its pathway is nucleotide-sugar biosynthesis; ADP-L-glycero-beta-D-manno-heptose biosynthesis; ADP-L-glycero-beta-D-manno-heptose from D-glycero-beta-D-manno-heptose 7-phosphate: step 1/4. It participates in nucleotide-sugar biosynthesis; ADP-L-glycero-beta-D-manno-heptose biosynthesis; ADP-L-glycero-beta-D-manno-heptose from D-glycero-beta-D-manno-heptose 7-phosphate: step 3/4. Catalyzes the phosphorylation of D-glycero-D-manno-heptose 7-phosphate at the C-1 position to selectively form D-glycero-beta-D-manno-heptose-1,7-bisphosphate. Functionally, catalyzes the ADP transfer from ATP to D-glycero-beta-D-manno-heptose 1-phosphate, yielding ADP-D-glycero-beta-D-manno-heptose. In Geobacter metallireducens (strain ATCC 53774 / DSM 7210 / GS-15), this protein is Bifunctional protein HldE.